A 376-amino-acid chain; its full sequence is Proteasome-interacting protein CIC1 (376 aa).

Disordered stretches follow at residues 1–29 (MAKK…KKSS) and 356–376 (RSSS…KAKS). The tract at residues 310–376 (ETHEDDMVTI…ESEAVKKAKS (67 aa)) is required for interaction with CDC4. The segment covering 357–376 (SSSELEKESSESEAVKKAKS) has biased composition (basic and acidic residues).

In terms of assembly, interacts with CDC4, PRE4, PRE6, RPT1 and SCL1 as part of the fully assembled 26S proteasome. Interacts with pre-ribosomal particles constituent NOP7.

The protein localises to the nucleus. It localises to the nucleolus. Its function is as follows. An adapter protein that specifically links the 26S proteasome to its substrate CDC4 which is one of the substrate recognition subunits of the SCF E3 ubiquitin ligase complex. Required for turnover of cell cycle regulatory proteins CDC4 and GRR1. Required for synthesis and nuclear export of 60S ribosomal subunits. Required for vegetative growth. This Saccharomyces cerevisiae (strain ATCC 204508 / S288c) (Baker's yeast) protein is Proteasome-interacting protein CIC1 (CIC1).